The primary structure comprises 508 residues: Probable malate:quinone oxidoreductase (508 aa).

It belongs to the MQO family. FAD is required as a cofactor.

It carries out the reaction (S)-malate + a quinone = a quinol + oxaloacetate. Its pathway is carbohydrate metabolism; tricarboxylic acid cycle; oxaloacetate from (S)-malate (quinone route): step 1/1. The protein is Probable malate:quinone oxidoreductase of Chromohalobacter salexigens (strain ATCC BAA-138 / DSM 3043 / CIP 106854 / NCIMB 13768 / 1H11).